The primary structure comprises 74 residues: NADH dehydrogenase [ubiquinone] 1 alpha subcomplex assembly factor 8 (74 aa).

A CHCH domain is found at 22–69 (LAACGAEAAAYGRCVQASTAPGGRLSKDFCAREFEALRSCFAAAAKKT). 2 consecutive short sequence motifs (cx9C motif) follow at residues 25–35 (CGAEAAAYGRC) and 51–61 (CAREFEALRSC). Intrachain disulfides connect Cys25–Cys61 and Cys35–Cys51.

Interacts with NDUFAF5.

Its subcellular location is the mitochondrion. Involved in the assembly of mitochondrial NADH:ubiquinone oxidoreductase complex (complex I, MT-ND1). Required to stabilize NDUFAF5. This is NADH dehydrogenase [ubiquinone] 1 alpha subcomplex assembly factor 8 from Homo sapiens (Human).